The following is a 366-amino-acid chain: tRNA/tmRNA (uracil-C(5))-methyltransferase (366 aa).

S-adenosyl-L-methionine is bound by residues Q190, Y218, N223, E239, and D299. Residue C324 is the Nucleophile of the active site. The active-site Proton acceptor is E358.

Belongs to the class I-like SAM-binding methyltransferase superfamily. RNA M5U methyltransferase family. TrmA subfamily.

The catalysed reaction is uridine(54) in tRNA + S-adenosyl-L-methionine = 5-methyluridine(54) in tRNA + S-adenosyl-L-homocysteine + H(+). It catalyses the reaction uridine(341) in tmRNA + S-adenosyl-L-methionine = 5-methyluridine(341) in tmRNA + S-adenosyl-L-homocysteine + H(+). Functionally, dual-specificity methyltransferase that catalyzes the formation of 5-methyluridine at position 54 (m5U54) in all tRNAs, and that of position 341 (m5U341) in tmRNA (transfer-mRNA). This Escherichia coli O7:K1 (strain IAI39 / ExPEC) protein is tRNA/tmRNA (uracil-C(5))-methyltransferase.